A 215-amino-acid polypeptide reads, in one-letter code: MKTLSERLNHALQLTGVTQSELARRIGIKQQSISQICSGKSARSRYTMQIAEALRVNAHWLATGDGEIGLGVGNVEVGPDIKGRIPLINWVQAGDWTEIAEGFAHEDAEEWREVTGKAHEGCFALRVKGDSMENPSGKKSIPEGAVIVVDPELPYSSGSLVVARLDDSKEATFKQLVIDGEQKYLKPLNPQYPAIPINGNCTIIGVVRQAIIDFW.

The region spanning 8 to 61 (LNHALQLTGVTQSELARRIGIKQQSISQICSGKSARSRYTMQIAEALRVNAHWL) is the HTH cro/C1-type domain. Positions 19–38 (QSELARRIGIKQQSISQICS) form a DNA-binding region, H-T-H motif.

In terms of biological role, may control the expression of the integrase and inhibit excision of the mobile element R391, and regulate the expression of other genes as well. This is HTH-type transcriptional regulator for conjugative element R391 from Providencia rettgeri.